The primary structure comprises 406 residues: ATPase ASNA1 homolog (406 aa).

Residue 21 to 28 coordinates ATP; that stretch reads KGGVGKTT. Residue D62 is part of the active site. ATP contacts are provided by E300 and N327. Zn(2+) is bound by residues C339 and C342.

The protein belongs to the arsA ATPase family. Homodimer.

Its subcellular location is the cytoplasm. It is found in the endoplasmic reticulum. In terms of biological role, ATPase required for the post-translational delivery of tail-anchored (TA) proteins to the endoplasmic reticulum. Recognizes and selectively binds the transmembrane domain of TA proteins in the cytosol. This complex then targets to the endoplasmic reticulum by membrane-bound receptors, where the tail-anchored protein is released for insertion. This process is regulated by ATP binding and hydrolysis. ATP binding drives the homodimer towards the closed dimer state, facilitating recognition of newly synthesized TA membrane proteins. ATP hydrolysis is required for insertion. Subsequently, the homodimer reverts towards the open dimer state, lowering its affinity for the membrane-bound receptor, and returning it to the cytosol to initiate a new round of targeting. This is ATPase ASNA1 homolog from Leishmania braziliensis.